A 196-amino-acid polypeptide reads, in one-letter code: Molybdenum cofactor guanylyltransferase (196 aa).

Residues 10-12 (LAG), Lys-23, Asn-51, Asp-69, and Asp-99 each bind GTP. Asp-99 lines the Mg(2+) pocket.

It belongs to the MobA family. In terms of assembly, monomer. The cofactor is Mg(2+).

The protein localises to the cytoplasm. It carries out the reaction Mo-molybdopterin + GTP + H(+) = Mo-molybdopterin guanine dinucleotide + diphosphate. Functionally, transfers a GMP moiety from GTP to Mo-molybdopterin (Mo-MPT) cofactor (Moco or molybdenum cofactor) to form Mo-molybdopterin guanine dinucleotide (Mo-MGD) cofactor. The chain is Molybdenum cofactor guanylyltransferase from Shewanella baltica (strain OS155 / ATCC BAA-1091).